Reading from the N-terminus, the 711-residue chain is Ribosomal RNA large subunit methyltransferase K/L (711 aa).

One can recognise a THUMP domain in the interval Thr-43–Leu-154.

This sequence belongs to the methyltransferase superfamily. RlmKL family.

Its subcellular location is the cytoplasm. The catalysed reaction is guanosine(2445) in 23S rRNA + S-adenosyl-L-methionine = N(2)-methylguanosine(2445) in 23S rRNA + S-adenosyl-L-homocysteine + H(+). The enzyme catalyses guanosine(2069) in 23S rRNA + S-adenosyl-L-methionine = N(2)-methylguanosine(2069) in 23S rRNA + S-adenosyl-L-homocysteine + H(+). Functionally, specifically methylates the guanine in position 2445 (m2G2445) and the guanine in position 2069 (m7G2069) of 23S rRNA. The polypeptide is Ribosomal RNA large subunit methyltransferase K/L (Haemophilus influenzae (strain ATCC 51907 / DSM 11121 / KW20 / Rd)).